A 563-amino-acid polypeptide reads, in one-letter code: Arginine--tRNA ligase (563 aa).

Positions 121–131 match the 'HIGH' region motif; that stretch reads PNIAKPFSIGH.

It belongs to the class-I aminoacyl-tRNA synthetase family. As to quaternary structure, monomer.

Its subcellular location is the cytoplasm. It carries out the reaction tRNA(Arg) + L-arginine + ATP = L-arginyl-tRNA(Arg) + AMP + diphosphate. The chain is Arginine--tRNA ligase from Streptococcus pyogenes serotype M18 (strain MGAS8232).